Here is a 347-residue protein sequence, read N- to C-terminus: Calcium homeostasis modulator protein 3 (347 aa).

Topologically, residues 1-20 are cytoplasmic; that stretch reads MDRFRMLFQHLQSSSESVMN. Residues 9-36 form a central pore region; that stretch reads QHLQSSSESVMNGICLLLAAVTVKIYSS. The chain crosses the membrane as a helical span at residues 21–36; it reads GICLLLAAVTVKIYSS. At 37-48 the chain is on the extracellular side; the sequence is LDFNCPCLERYN. 2 disulfides stabilise this stretch: C41-C126 and C43-C157. Residues 49 to 71 traverse the membrane as a helical segment; sequence ALYGLGLLLTPPLALFLCGLLVN. Residues 72–98 are Cytoplasmic-facing; the sequence is RQSVLMVEEWRRPAGHRRKDLGIIRYM. C99 carries S-palmitoyl cysteine lipidation. A helical transmembrane segment spans residues 99–124; sequence CSSVLQRALAAPLVWILLALLDGKCF. Residues 125–176 lie on the Extracellular side of the membrane; that stretch reads VCAFSNSVDPEKFLDFANMTPRQVQLFLAKVPCKEDELVKNSPARKAVSRYL. An N-linked (GlcNAc...) asparagine glycan is attached at N142. A helical membrane pass occupies residues 177–202; sequence RCLSQAIGWSITLLVIVVAFLARCLR. 2 S-palmitoyl cysteine lipidation sites follow: C200 and C204. Residues 203-347 lie on the Cytoplasmic side of the membrane; sequence PCFDQTVFLQ…GTKLCHQLNV (145 aa). The interval 265–290 is disordered; it reads GGIPESQESSEPPELREDRDSGNGKA. Over residues 277–286 the composition is skewed to basic and acidic residues; it reads PELREDRDSG.

Belongs to the CALHM family. As to quaternary structure, associates with CALHM1 as a pore-forming subunit in a hetero-hexameric channel complex. Post-translationally, N-glycosylated. In terms of processing, palmitoylated by ZDHHC3 and ZDHHC15. Palmitoylation positively regulates CALHM1:CALHM3 channel conductance. In terms of tissue distribution, expressed in taste bud cells.

The protein resides in the basolateral cell membrane. It catalyses the reaction ATP(in) = ATP(out). The enzyme catalyses Ca(2+)(in) = Ca(2+)(out). It carries out the reaction Na(+)(in) = Na(+)(out). The catalysed reaction is K(+)(in) = K(+)(out). It catalyses the reaction chloride(in) = chloride(out). Pore-forming subunit of gustatory voltage-gated ion channels required for sensory perception of sweet, bitter and umami tastes. With CALHM1 forms a fast-activating voltage-gated ATP-release channel in type II taste bud cells, ATP acting as a neurotransmitter to activate afferent neural gustatory pathways. Acts both as a voltage-gated and calcium-activated ion channel: mediates neuronal excitability in response to membrane depolarization and low extracellular Ca(2+) concentration. Has poor ion selectivity and forms a wide pore (around 14 Angstroms) that mediates permeation of small ions including Ca(2+), Na(+), K(+) and Cl(-), as well as larger ions such as ATP(4-). The sequence is that of Calcium homeostasis modulator protein 3 from Mus musculus (Mouse).